The following is a 67-amino-acid chain: Large ribosomal subunit protein bL35 (67 aa).

The protein belongs to the bacterial ribosomal protein bL35 family.

In Bartonella henselae (strain ATCC 49882 / DSM 28221 / CCUG 30454 / Houston 1) (Rochalimaea henselae), this protein is Large ribosomal subunit protein bL35.